The primary structure comprises 783 residues: Metabotropic glutamate receptor-like protein J (783 aa).

Residues 1 to 20 (MKILLYIAIILSFFSLITIS) form the signal peptide. Residues 21–383 (SECKIAVLLS…DYPNSLKYGV (363 aa)) are Extracellular-facing. Residues 56 to 85 (DFSIYYENLEESMEEAEKAFQDALHKGANL) adopt a coiled-coil conformation. N181, N196, N256, N282, and N315 each carry an N-linked (GlcNAc...) asparagine glycan. Residues 384–404 (TIVSGVCIFICLVCMTLVVVF) traverse the membrane as a helical segment. Topologically, residues 405–415 (KKARVIKSSSP) are cytoplasmic. The helical transmembrane segment at 416 to 436 (AFLLLILLGCCIIFAACILFA) threads the bilayer. Residues 437–443 (QSPTNQT) are Extracellular-facing. A glycan (N-linked (GlcNAc...) asparagine) is linked at N441. A helical membrane pass occupies residues 444–464 (CSARIWLLSLGYTLFLGNLLV). The Cytoplasmic portion of the chain corresponds to 465–489 (KNWRIWLLFDNPKLKKRAITNWKLY). The helical transmembrane segment at 490 to 510 (PWVFAILAIDVMILAIWQGLG) threads the bilayer. The Extracellular portion of the chain corresponds to 511–538 (NINAESRIGYDSLTQYQYKNVCSSDDQG). Residues 539–559 (SIALYLLLVFHGLVLLVACFI) form a helical membrane-spanning segment. Residues 560–575 (SFKIKVVDIEEFNESK) lie on the Cytoplasmic side of the membrane. A helical transmembrane segment spans residues 576–596 (PITTSVYIITFCLFIVIPLMV). The Extracellular portion of the chain corresponds to 597 to 604 (SPQSLTSQ). Residues 605 to 625 (TTIICVCAIVTTLISMLLLFG) form a helical membrane-spanning segment. At 626–783 (SKFYKMATQG…GETEIDSNNV (158 aa)) the chain is on the cytoplasmic side. Positions 647-656 (KSSSKSSKSS) are enriched in low complexity. Disordered stretches follow at residues 647-696 (KSSS…FSNK) and 731-783 (QLQQ…SNNV). Residues 670 to 679 (GEDDTSDETS) are compositionally biased toward acidic residues. A compositionally biased stretch (polar residues) spans 763-783 (VLSKRISNQQNGETEIDSNNV).

This sequence in the N-terminal section; belongs to the BMP lipoprotein family. The protein in the C-terminal section; belongs to the G-protein coupled receptor 3 family. GABA-B receptor subfamily.

Its subcellular location is the cell membrane. It is found in the membrane. It localises to the endoplasmic reticulum membrane. The protein localises to the golgi apparatus membrane. The protein resides in the nucleus envelope. In terms of biological role, may act during the development and be a negative regulator. In Dictyostelium discoideum (Social amoeba), this protein is Metabotropic glutamate receptor-like protein J (grlJ).